The following is a 147-amino-acid chain: Antiholin-like protein LrgA (147 aa).

A run of 4 helical transmembrane segments spans residues 12-32 (PAHF…SKII), 35-55 (FMPI…VLLC), 74-94 (NIGL…GVIS), and 98-118 (FLII…TGYV).

It belongs to the CidA/LrgA family. LrgA subfamily.

The protein localises to the cell membrane. In terms of biological role, inhibits the expression or activity of extracellular murein hydrolases by interacting, possibly with LrgB, with the holin-like proteins CidA and/or CidB. The LrgAB and CidAB proteins may affect the proton motive force of the membrane. May be involved in programmed cell death (PCD), possibly triggering PCD in response to antibiotics and environmental stresses. The protein is Antiholin-like protein LrgA of Staphylococcus aureus (strain MSSA476).